The following is a 546-amino-acid chain: Glutathione synthetase, chloroplastic (546 aa).

A chloroplast-targeting transit peptide spans 1-63; it reads MGSGCSSPSI…SPLKCAKVPE (63 aa). Residue R200 coordinates substrate. E216 contributes to the ATP binding site. Mg(2+) is bound by residues E216 and N218. Substrate contacts are provided by residues 220 to 223, 288 to 290, Q294, and 342 to 345; these read ISSS, ERN, and RAGY. Residues K381, 435-444, Y446, 471-474, and E497 each bind ATP; these read KPQREGGGNN and MQRI. E439 contacts Mg(2+). Position 522 (R522) interacts with substrate. 2 residues coordinate ATP: K524 and E530. 533-534 is a substrate binding site; it reads VA.

It belongs to the eukaryotic GSH synthase family. In terms of assembly, homodimer. Mg(2+) serves as cofactor.

The protein localises to the plastid. The protein resides in the chloroplast. The catalysed reaction is gamma-L-glutamyl-L-cysteine + glycine + ATP = glutathione + ADP + phosphate + H(+). It functions in the pathway sulfur metabolism; glutathione biosynthesis; glutathione from L-cysteine and L-glutamate: step 2/2. This Solanum lycopersicum (Tomato) protein is Glutathione synthetase, chloroplastic (GSH2).